The chain runs to 182 residues: Regulatory protein RecX (182 aa).

Residues 12 to 54 (LSQRDHSESELRRKLAAPPFSAKGNWGKRSGAKSSNLVESNPV) are disordered. Over residues 13-24 (SQRDHSESELRR) the composition is skewed to basic and acidic residues. Polar residues predominate over residues 43–54 (AKSSNLVESNPV).

This sequence belongs to the RecX family.

The protein resides in the cytoplasm. Modulates RecA activity. The protein is Regulatory protein RecX of Yersinia pseudotuberculosis serotype I (strain IP32953).